Reading from the N-terminus, the 698-residue chain is Effector protein AvrPphDPgy (698 aa).

Positions 1–15 (MNPLRSIQHNITTPP) are enriched in polar residues. Disordered stretches follow at residues 1–36 (MNPL…HPKR) and 171–200 (VDSS…DSDS). Residues 172-181 (DSSSPLLSSP) are compositionally biased toward low complexity.

It localises to the secreted. In terms of biological role, effector protein involved in non-host recognition. The chain is Effector protein AvrPphDPgy (avrPphDPgy) from Pseudomonas savastanoi pv. glycinea (Pseudomonas syringae pv. glycinea).